The sequence spans 371 residues: 2-aminoethylphosphonate--pyruvate transaminase (371 aa).

At lysine 198 the chain carries N6-(pyridoxal phosphate)lysine.

The protein belongs to the class-V pyridoxal-phosphate-dependent aminotransferase family. PhnW subfamily. As to quaternary structure, homodimer. Requires pyridoxal 5'-phosphate as cofactor.

The enzyme catalyses (2-aminoethyl)phosphonate + pyruvate = phosphonoacetaldehyde + L-alanine. Involved in phosphonate degradation. This Syntrophobacter fumaroxidans (strain DSM 10017 / MPOB) protein is 2-aminoethylphosphonate--pyruvate transaminase.